Reading from the N-terminus, the 309-residue chain is Probable pyridoxal 5'-phosphate synthase subunit PDX1 (309 aa).

Asp40 contributes to the D-ribose 5-phosphate binding site. Catalysis depends on Lys97, which acts as the Schiff-base intermediate with D-ribose 5-phosphate. Gly169 is a binding site for D-ribose 5-phosphate. Arg181 lines the D-glyceraldehyde 3-phosphate pocket. D-ribose 5-phosphate-binding positions include Gly230 and 251-252 (GS).

The protein belongs to the PdxS/SNZ family.

It catalyses the reaction aldehydo-D-ribose 5-phosphate + D-glyceraldehyde 3-phosphate + L-glutamine = pyridoxal 5'-phosphate + L-glutamate + phosphate + 3 H2O + H(+). Its pathway is cofactor biosynthesis; pyridoxal 5'-phosphate biosynthesis. Its function is as follows. Catalyzes the formation of pyridoxal 5'-phosphate from ribose 5-phosphate (RBP), glyceraldehyde 3-phosphate (G3P) and ammonia. The ammonia is provided by PDX2. Can also use ribulose 5-phosphate and dihydroxyacetone phosphate as substrates, resulting from enzyme-catalyzed isomerization of RBP and G3P, respectively. Also plays an indirect role in resistance to singlet oxygen-generating photosensitizers. This is Probable pyridoxal 5'-phosphate synthase subunit PDX1 (PDX1) from Ginkgo biloba (Ginkgo).